Reading from the N-terminus, the 550-residue chain is Phosphomannomutase (550 aa).

Serine 148 acts as the Phosphoserine intermediate in catalysis. Serine 148, aspartate 300, aspartate 302, and aspartate 304 together coordinate Mg(2+).

Belongs to the phosphohexose mutase family. Requires Mg(2+) as cofactor.

The enzyme catalyses alpha-D-mannose 1-phosphate = D-mannose 6-phosphate. The sequence is that of Phosphomannomutase (manB) from Mycoplasma genitalium (strain ATCC 33530 / DSM 19775 / NCTC 10195 / G37) (Mycoplasmoides genitalium).